The chain runs to 379 residues: F-box protein At5g18160 (379 aa).

The segment at 1–26 (MDKQDEKKQGTTKSSSTLTTRCSHGN) is disordered. Positions 11–26 (TTKSSSTLTTRCSHGN) are enriched in polar residues. In terms of domain architecture, F-box spans 28-74 (ISQSNSIPLDITIEILSRLPAKSIVRSRSVSKLWSSITTTPEFIKHR).

The polypeptide is F-box protein At5g18160 (Arabidopsis thaliana (Mouse-ear cress)).